Here is a 726-residue protein sequence, read N- to C-terminus: MAR-binding filament-like protein 1 (726 aa).

The transit peptide at 1–41 (MGFLIGGSCFVPSVPLHSRFLSSPSSSSSSSPSSSQFGLLC) directs the protein to the chloroplast. Residues 42-95 (SSNVAKFKRRRPTLASLNQEDGYEYDVASAKRRAFLLVGISVLPFLQLRSPALA) constitute a thylakoid transit peptide. Residues 96 to 124 (DERGNEIKTSKVDLETEVAVVSEGTSPNP) are Lumenal, thylakoid-facing. A helical transmembrane segment spans residues 125–145 (FLALLNGLGIFSAGVLGALYA). Positions 144-691 (YALARQDTKA…KGEILRMRSQ (548 aa)) form a coiled coil. At 146–726 (LARQDTKAAE…VRRRKSSTSS (581 aa)) the chain is on the stromal side. Residues 678–726 (LGSAKGEILRMRSQPDSVKAVNSTDNKEKSDNTVTVKKVVRRRKSSTSS) are disordered. Over residues 691 to 701 (QPDSVKAVNST) the composition is skewed to polar residues. The Nuclear localization signal motif lies at 715 to 722 (KVVRRRKS). The segment covering 715-726 (KVVRRRKSSTSS) has biased composition (basic residues).

Interacts with PTST2; the interaction is essential for the initiation of starch granules biosynthesis in leaf chloroplasts, for the correct location of the process in the stromal spaces between the thylakoid membranes, and for the association of PTST2 with the thylakoid membranes. Predicted to be translocated into the thylakoid by the Tat system. The position of the transit peptide cleavages have not been experimentally proven.

The protein resides in the plastid. Its subcellular location is the chloroplast. It is found in the chloroplast thylakoid membrane. It localises to the chloroplast stroma. The protein localises to the chloroplast nucleoid. The protein resides in the nucleus. Its subcellular location is the nucleus matrix. Functionally, DNA-binding protein required for the initiation of starch granules biosynthesis in leaf chloroplasts. Anchored to the thylakoid membranes with its C-terminus facing into the stroma where it is essential for localizing PTST2 and SS4 to the stromal spaces between the thylakoid membranes in order to begin starch granule formation. Associated with leaf chloroplastic nucleoids in vivo. Binds to various chloroplastic double-stranded DNA fragments without particular sequence specificity in vitro. May function at the interface between nucleoids and thylakoids possibly by anchoring nucleoids to the thylakoid membrane system in mature chloroplasts. Likely to participate in nuclear architecture by connecting chromatin with the nuclear matrix and potentially with the nuclear envelope. This chain is MAR-binding filament-like protein 1, found in Arabidopsis thaliana (Mouse-ear cress).